The primary structure comprises 732 residues: Elongation factor 2 (732 aa).

The tr-type G domain maps to 19-260 (ERIRNIGIAA…MVVRHLPSPI (242 aa)). GTP is bound by residues 28–35 (AHIDHGKT), 94–98 (DTPGH), and 148–151 (NKVD). Residue His597 is modified to Diphthamide.

The protein belongs to the TRAFAC class translation factor GTPase superfamily. Classic translation factor GTPase family. EF-G/EF-2 subfamily.

Its subcellular location is the cytoplasm. Its function is as follows. Catalyzes the GTP-dependent ribosomal translocation step during translation elongation. During this step, the ribosome changes from the pre-translocational (PRE) to the post-translocational (POST) state as the newly formed A-site-bound peptidyl-tRNA and P-site-bound deacylated tRNA move to the P and E sites, respectively. Catalyzes the coordinated movement of the two tRNA molecules, the mRNA and conformational changes in the ribosome. This chain is Elongation factor 2 (fusA), found in Pyrococcus furiosus (strain ATCC 43587 / DSM 3638 / JCM 8422 / Vc1).